The sequence spans 431 residues: Enolase (431 aa).

Q166 is a (2R)-2-phosphoglycerate binding site. E208 (proton donor) is an active-site residue. Mg(2+) is bound by residues D245, E288, and D315. (2R)-2-phosphoglycerate-binding residues include K340, R369, S370, and K391. Residue K340 is the Proton acceptor of the active site.

It belongs to the enolase family. Mg(2+) is required as a cofactor.

The protein resides in the cytoplasm. Its subcellular location is the secreted. The protein localises to the cell surface. The catalysed reaction is (2R)-2-phosphoglycerate = phosphoenolpyruvate + H2O. Its pathway is carbohydrate degradation; glycolysis; pyruvate from D-glyceraldehyde 3-phosphate: step 4/5. Catalyzes the reversible conversion of 2-phosphoglycerate (2-PG) into phosphoenolpyruvate (PEP). It is essential for the degradation of carbohydrates via glycolysis. The polypeptide is Enolase (Clostridium botulinum (strain Eklund 17B / Type B)).